Reading from the N-terminus, the 345-residue chain is S-adenosylmethionine:tRNA ribosyltransferase-isomerase (345 aa).

It belongs to the QueA family. Monomer.

It is found in the cytoplasm. The enzyme catalyses 7-aminomethyl-7-carbaguanosine(34) in tRNA + S-adenosyl-L-methionine = epoxyqueuosine(34) in tRNA + adenine + L-methionine + 2 H(+). The protein operates within tRNA modification; tRNA-queuosine biosynthesis. Its function is as follows. Transfers and isomerizes the ribose moiety from AdoMet to the 7-aminomethyl group of 7-deazaguanine (preQ1-tRNA) to give epoxyqueuosine (oQ-tRNA). The polypeptide is S-adenosylmethionine:tRNA ribosyltransferase-isomerase (Helicobacter pylori (strain ATCC 700392 / 26695) (Campylobacter pylori)).